The sequence spans 363 residues: Chorismate synthase (363 aa).

The disordered stretch occupies residues 42–61; the sequence is QRDLDRRKPGTSRHTTQRQE. NADP(+) contacts are provided by Arg-48 and Arg-54. FMN is bound by residues 125–127, 237–238, Gly-277, 292–296, and Arg-318; these read RSS, NA, and KPTSS.

The protein belongs to the chorismate synthase family. As to quaternary structure, homotetramer. It depends on FMNH2 as a cofactor.

The enzyme catalyses 5-O-(1-carboxyvinyl)-3-phosphoshikimate = chorismate + phosphate. The protein operates within metabolic intermediate biosynthesis; chorismate biosynthesis; chorismate from D-erythrose 4-phosphate and phosphoenolpyruvate: step 7/7. Its function is as follows. Catalyzes the anti-1,4-elimination of the C-3 phosphate and the C-6 proR hydrogen from 5-enolpyruvylshikimate-3-phosphate (EPSP) to yield chorismate, which is the branch point compound that serves as the starting substrate for the three terminal pathways of aromatic amino acid biosynthesis. This reaction introduces a second double bond into the aromatic ring system. This is Chorismate synthase from Pseudomonas aeruginosa (strain LESB58).